Reading from the N-terminus, the 647-residue chain is Starch synthase 1, chloroplastic/amyloplastic (647 aa).

A chloroplast-targeting transit peptide spans 1–41 (MAATGVGAGCLAPSVRLRADPATAARASACVVRARLRRVAR). Residues 66-91 (PLVPGFLAPPPPAPAQSPAPTQPPLP) show a composition bias toward pro residues. The tract at residues 66–95 (PLVPGFLAPPPPAPAQSPAPTQPPLPDAGV) is disordered. Position 153 (lysine 153) interacts with ADP-alpha-D-glucose.

It belongs to the glycosyltransferase 1 family. Bacterial/plant glycogen synthase subfamily.

Its subcellular location is the plastid. The protein resides in the chloroplast. The protein localises to the amyloplast. The catalysed reaction is [(1-&gt;4)-alpha-D-glucosyl](n) + ADP-alpha-D-glucose = [(1-&gt;4)-alpha-D-glucosyl](n+1) + ADP + H(+). It participates in glycan biosynthesis; starch biosynthesis. In Triticum aestivum (Wheat), this protein is Starch synthase 1, chloroplastic/amyloplastic (WSSI-2).